The chain runs to 291 residues: Nucleotide-binding protein Cthe_0113 (291 aa).

Residue 8–15 participates in ATP binding; the sequence is GISGAGKS. 59-62 provides a ligand contact to GTP; it reads DIRG.

It belongs to the RapZ-like family.

In terms of biological role, displays ATPase and GTPase activities. This chain is Nucleotide-binding protein Cthe_0113, found in Acetivibrio thermocellus (strain ATCC 27405 / DSM 1237 / JCM 9322 / NBRC 103400 / NCIMB 10682 / NRRL B-4536 / VPI 7372) (Clostridium thermocellum).